The chain runs to 124 residues: Small ribosomal subunit protein uS12 (124 aa).

D89 is modified (3-methylthioaspartic acid).

Belongs to the universal ribosomal protein uS12 family. Part of the 30S ribosomal subunit. Contacts proteins S8 and S17. May interact with IF1 in the 30S initiation complex.

Functionally, with S4 and S5 plays an important role in translational accuracy. Interacts with and stabilizes bases of the 16S rRNA that are involved in tRNA selection in the A site and with the mRNA backbone. Located at the interface of the 30S and 50S subunits, it traverses the body of the 30S subunit contacting proteins on the other side and probably holding the rRNA structure together. The combined cluster of proteins S8, S12 and S17 appears to hold together the shoulder and platform of the 30S subunit. This chain is Small ribosomal subunit protein uS12, found in Arthrobacter sp. (strain FB24).